A 62-amino-acid chain; its full sequence is Protein P14 (62 aa).

In terms of biological role, needed for optimal phage development. This chain is Protein P14 (P14), found in Pseudomonas savastanoi pv. phaseolicola (Pseudomonas syringae pv. phaseolicola).